We begin with the raw amino-acid sequence, 201 residues long: Proteasome subunit beta type-2 (201 aa).

Methionine 1 is modified (N-acetylmethionine).

This sequence belongs to the peptidase T1B family. In terms of assembly, the 26S proteasome consists of a 20S proteasome core and two 19S regulatory subunits. The 20S proteasome core is a barrel-shaped complex made of 28 subunits that are arranged in four stacked rings. The two outer rings are each formed by seven alpha subunits, and the two inner rings are formed by seven beta subunits. The proteolytic activity is exerted by three beta-subunits PSMB5, PSMB6 and PSMB7.

It is found in the cytoplasm. The protein localises to the nucleus. Functionally, non-catalytic component of the 20S core proteasome complex involved in the proteolytic degradation of most intracellular proteins. This complex plays numerous essential roles within the cell by associating with different regulatory particles. Associated with two 19S regulatory particles, forms the 26S proteasome and thus participates in the ATP-dependent degradation of ubiquitinated proteins. The 26S proteasome plays a key role in the maintenance of protein homeostasis by removing misfolded or damaged proteins that could impair cellular functions, and by removing proteins whose functions are no longer required. Associated with the PA200 or PA28, the 20S proteasome mediates ubiquitin-independent protein degradation. This type of proteolysis is required in several pathways including spermatogenesis (20S-PA200 complex) or generation of a subset of MHC class I-presented antigenic peptides (20S-PA28 complex). This chain is Proteasome subunit beta type-2 (PSMB2), found in Bos taurus (Bovine).